The sequence spans 436 residues: Trigger factor (436 aa).

One can recognise a PPIase FKBP-type domain in the interval 161 to 246 (GDQVNIDFVG…VNSVAAPQLP (86 aa)).

The protein belongs to the FKBP-type PPIase family. Tig subfamily.

Its subcellular location is the cytoplasm. It catalyses the reaction [protein]-peptidylproline (omega=180) = [protein]-peptidylproline (omega=0). In terms of biological role, involved in protein export. Acts as a chaperone by maintaining the newly synthesized protein in an open conformation. Functions as a peptidyl-prolyl cis-trans isomerase. The protein is Trigger factor of Stutzerimonas stutzeri (strain A1501) (Pseudomonas stutzeri).